The chain runs to 369 residues: Glutamate 5-kinase (369 aa).

Lysine 10 is a binding site for ATP. Serine 50, aspartate 137, and asparagine 149 together coordinate substrate. Residues 169-170 and 210-216 each bind ATP; these read TD and TGGMVTK. The PUA domain maps to 276–349; sequence EGSIFIDEGA…GKHSEEMLAT (74 aa).

It belongs to the glutamate 5-kinase family.

The protein resides in the cytoplasm. The catalysed reaction is L-glutamate + ATP = L-glutamyl 5-phosphate + ADP. The protein operates within amino-acid biosynthesis; L-proline biosynthesis; L-glutamate 5-semialdehyde from L-glutamate: step 1/2. In terms of biological role, catalyzes the transfer of a phosphate group to glutamate to form L-glutamate 5-phosphate. In Desulfitobacterium hafniense (strain Y51), this protein is Glutamate 5-kinase.